Here is a 282-residue protein sequence, read N- to C-terminus: Aquaporin PIP-type (282 aa).

The next 2 membrane-spanning stretches (helical) occupy residues 39–61 and 74–96; these read WRAA…ATVI and GLLG…TAGI. The short motif at 102 to 104 is the NPA 1 element; the sequence is NPA. Helical transmembrane passes span 116–138, 159–181, 201–223, and 243–265; these read SLLR…VGLV, GYNK…YTVF, LPIG…TGIN, and HWIF…QYVL. The NPA 2 signature appears at 223 to 225; it reads NPA.

Belongs to the MIP/aquaporin (TC 1.A.8) family. PIP (TC 1.A.8.11) subfamily.

The protein localises to the membrane. Water-specific channel. This Atriplex canescens (Fourwing saltbush) protein is Aquaporin PIP-type.